The chain runs to 431 residues: Serine--tRNA ligase (431 aa).

Residue 236-238 (TAE) coordinates L-serine. 267-269 (RSE) provides a ligand contact to ATP. An L-serine-binding site is contributed by Glu290. 354-357 (EISS) contacts ATP. Ser389 serves as a coordination point for L-serine.

It belongs to the class-II aminoacyl-tRNA synthetase family. Type-1 seryl-tRNA synthetase subfamily. As to quaternary structure, homodimer. The tRNA molecule binds across the dimer.

It localises to the cytoplasm. The catalysed reaction is tRNA(Ser) + L-serine + ATP = L-seryl-tRNA(Ser) + AMP + diphosphate + H(+). It catalyses the reaction tRNA(Sec) + L-serine + ATP = L-seryl-tRNA(Sec) + AMP + diphosphate + H(+). It functions in the pathway aminoacyl-tRNA biosynthesis; selenocysteinyl-tRNA(Sec) biosynthesis; L-seryl-tRNA(Sec) from L-serine and tRNA(Sec): step 1/1. Its function is as follows. Catalyzes the attachment of serine to tRNA(Ser). Is also able to aminoacylate tRNA(Sec) with serine, to form the misacylated tRNA L-seryl-tRNA(Sec), which will be further converted into selenocysteinyl-tRNA(Sec). In Janthinobacterium sp. (strain Marseille) (Minibacterium massiliensis), this protein is Serine--tRNA ligase.